The chain runs to 185 residues: MANAIVEKAKERFEQSHQSLAREFGSIRAGRANASLLDRIEVEYYGVPTPLNQLASITVPEARVLLVSPFDKSSLKDIEHAINASDIGINPANDGSVIRLVIPALTEETRKELAKEVKKVGENAKVAIRNIRRDAMDEAKKQEKIKEITEDELKSLEKDIQKVTDEAVKHIDSMTANKEKELLEV.

Belongs to the RRF family.

The protein localises to the cytoplasm. In terms of biological role, responsible for the release of ribosomes from messenger RNA at the termination of protein biosynthesis. May increase the efficiency of translation by recycling ribosomes from one round of translation to another. In Streptococcus mutans serotype c (strain ATCC 700610 / UA159), this protein is Ribosome-recycling factor.